The chain runs to 306 residues: Protoheme IX farnesyltransferase (306 aa).

A run of 9 helical transmembrane segments spans residues 32 to 52 (VVAL…PGAL), 58 to 78 (IPAM…NHIV), 103 to 123 (NAIV…YALV), 126 to 146 (LTAF…TMYL), 153 to 173 (NITI…TAMT), 180 to 200 (ALLL…ALAI), 227 to 247 (ILLY…VGMS), 249 to 269 (WLYL…AWQL), and 278 to 298 (AMAT…ILLL).

It belongs to the UbiA prenyltransferase family. Protoheme IX farnesyltransferase subfamily.

The protein localises to the cell inner membrane. It carries out the reaction heme b + (2E,6E)-farnesyl diphosphate + H2O = Fe(II)-heme o + diphosphate. The protein operates within porphyrin-containing compound metabolism; heme O biosynthesis; heme O from protoheme: step 1/1. In terms of biological role, converts heme B (protoheme IX) to heme O by substitution of the vinyl group on carbon 2 of heme B porphyrin ring with a hydroxyethyl farnesyl side group. The sequence is that of Protoheme IX farnesyltransferase from Colwellia psychrerythraea (strain 34H / ATCC BAA-681) (Vibrio psychroerythus).